A 681-amino-acid chain; its full sequence is Methionine--tRNA ligase (681 aa).

The 'HIGH' region motif lies at 14-24 (PYANGSIHLGH). Zn(2+) is bound by residues Cys-145, Cys-148, Cys-158, and Cys-161. The 'KMSKS' region motif lies at 331–335 (KMSKS). Lys-334 serves as a coordination point for ATP. The region spanning 579–681 (TFAAVDLRVA…SGAKPGQRIK (103 aa)) is the tRNA-binding domain.

The protein belongs to the class-I aminoacyl-tRNA synthetase family. MetG type 1 subfamily. Homodimer. Requires Zn(2+) as cofactor.

It is found in the cytoplasm. It carries out the reaction tRNA(Met) + L-methionine + ATP = L-methionyl-tRNA(Met) + AMP + diphosphate. Is required not only for elongation of protein synthesis but also for the initiation of all mRNA translation through initiator tRNA(fMet) aminoacylation. The chain is Methionine--tRNA ligase from Pseudomonas putida (strain W619).